The following is a 313-amino-acid chain: Minor outer capsid protein P9 (313 aa).

It belongs to the phytoreovirus minor outer capsid protein P9 family.

The protein localises to the virion. It is found in the host cytoplasm. Functionally, minor outer capsid protein. This Catharanthus roseus (Madagascar periwinkle) protein is Minor outer capsid protein P9.